Here is a 384-residue protein sequence, read N- to C-terminus: uncharacterized protein (384 aa).

This is an uncharacterized protein from Acanthamoeba polyphaga (Amoeba).